We begin with the raw amino-acid sequence, 360 residues long: Heat-inducible transcription repressor HrcA (360 aa).

This sequence belongs to the HrcA family.

Functionally, negative regulator of class I heat shock genes (grpE-dnaK-dnaJ and groELS operons). Prevents heat-shock induction of these operons. This is Heat-inducible transcription repressor HrcA from Mesorhizobium japonicum (strain LMG 29417 / CECT 9101 / MAFF 303099) (Mesorhizobium loti (strain MAFF 303099)).